The primary structure comprises 481 residues: Phosphoglucosamine mutase (481 aa).

Catalysis depends on Ser128, which acts as the Phosphoserine intermediate. Residues Ser128, Asp269, Asp271, and Asp273 each contribute to the Mg(2+) site. Position 128 is a phosphoserine (Ser128).

Belongs to the phosphohexose mutase family. The cofactor is Mg(2+). In terms of processing, activated by phosphorylation.

The catalysed reaction is alpha-D-glucosamine 1-phosphate = D-glucosamine 6-phosphate. Catalyzes the conversion of glucosamine-6-phosphate to glucosamine-1-phosphate. This chain is Phosphoglucosamine mutase, found in Synechocystis sp. (strain ATCC 27184 / PCC 6803 / Kazusa).